A 56-amino-acid chain; its full sequence is Large ribosomal subunit protein bL32 (56 aa).

The interval 1-26 (MAVQQNKPTRSKRGMRRSHDSLTTAA) is disordered.

This sequence belongs to the bacterial ribosomal protein bL32 family.

This chain is Large ribosomal subunit protein bL32, found in Erwinia tasmaniensis (strain DSM 17950 / CFBP 7177 / CIP 109463 / NCPPB 4357 / Et1/99).